The primary structure comprises 114 residues: Ribonuclease P protein component (114 aa).

Belongs to the RnpA family. As to quaternary structure, consists of a catalytic RNA component (M1 or rnpB) and a protein subunit.

The catalysed reaction is Endonucleolytic cleavage of RNA, removing 5'-extranucleotides from tRNA precursor.. Its function is as follows. RNaseP catalyzes the removal of the 5'-leader sequence from pre-tRNA to produce the mature 5'-terminus. It can also cleave other RNA substrates such as 4.5S RNA. The protein component plays an auxiliary but essential role in vivo by binding to the 5'-leader sequence and broadening the substrate specificity of the ribozyme. This is Ribonuclease P protein component from Staphylococcus haemolyticus (strain JCSC1435).